A 248-amino-acid chain; its full sequence is Ubiquinone biosynthesis O-methyltransferase (248 aa).

S-adenosyl-L-methionine is bound by residues Arg41, Gly72, Asp93, and Met136.

It belongs to the methyltransferase superfamily. UbiG/COQ3 family.

It catalyses the reaction a 3-demethylubiquinol + S-adenosyl-L-methionine = a ubiquinol + S-adenosyl-L-homocysteine + H(+). It carries out the reaction a 3-(all-trans-polyprenyl)benzene-1,2-diol + S-adenosyl-L-methionine = a 2-methoxy-6-(all-trans-polyprenyl)phenol + S-adenosyl-L-homocysteine + H(+). It participates in cofactor biosynthesis; ubiquinone biosynthesis. In terms of biological role, O-methyltransferase that catalyzes the 2 O-methylation steps in the ubiquinone biosynthetic pathway. This chain is Ubiquinone biosynthesis O-methyltransferase, found in Sinorhizobium medicae (strain WSM419) (Ensifer medicae).